Consider the following 226-residue polypeptide: Chalcone--flavanone isomerase 1 (226 aa).

The substrate site is built by T52, N117, and T194.

It belongs to the chalcone isomerase family.

The enzyme catalyses a chalcone = a flavanone.. Its pathway is secondary metabolite biosynthesis; flavonoid biosynthesis. Functionally, catalyzes the intramolecular cyclization of bicyclic chalcones into tricyclic (S)-flavanones. Responsible for the isomerization of 4,2',4',6'-tetrahydroxychalcone (also termed chalcone) into naringenin. The protein is Chalcone--flavanone isomerase 1 (CHI1) of Lotus japonicus (Lotus corniculatus var. japonicus).